A 530-amino-acid chain; its full sequence is 4,4'-diapolycopene aldehyde oxidase (530 aa).

Residues Glu234 and Cys268 contribute to the active site.

It belongs to the aldehyde dehydrogenase family.

It carries out the reaction all-trans-4,4'-diapolycopen-4-al + A + H2O = all-trans-4,4'-diapolycopen-4-oate + AH2 + H(+). The catalysed reaction is all-trans-4,4'-diapolycopene-4,4'-dial + 2 A + 2 H2O = all-trans-4,4'-diapolycopene-4,4'-dioate + 2 AH2 + 2 H(+). Its pathway is carotenoid biosynthesis. Functionally, involved in the biosynthesis of C30 carotenoids. Catalyzes the oxidation of 4,4'-diapolycopene-4,4'-dial to yield 4,4'-diapolycopene-4,4'-dioic acid. Also able to catalyze the oxidation of 4,4'-diapolycopen-4-al to yield 4,4'-diapolycopen-4-oic acid. The sequence is that of 4,4'-diapolycopene aldehyde oxidase from Methylomonas sp.